A 51-amino-acid polypeptide reads, in one-letter code: Large ribosomal subunit protein eL39 (51 aa).

The protein belongs to the eukaryotic ribosomal protein eL39 family.

This chain is Large ribosomal subunit protein eL39 (rpl39e), found in Pyrococcus abyssi (strain GE5 / Orsay).